The following is a 1290-amino-acid chain: 1-phosphatidylinositol 4,5-bisphosphate phosphodiesterase gamma-1 (1290 aa).

A2 is subject to N-acetylalanine. Positions 27–142 (RSLEVGTVMT…WIKGLTWLME (116 aa)) constitute a PH 1 domain. Residues 152–187 (QIERWLRKQFYSVDRNREDRISAKDLKNMLSQVNYR) form the EF-hand domain. The Ca(2+) site is built by D165, N167, E169, R171, and D176. The PI-PLC X-box domain occupies 320 to 464 (DTMNNPLSHY…LKRKILIKHK (145 aa)). Catalysis depends on residues H335 and H380. One can recognise a PH 2; first part domain in the interval 489 to 523 (SIKNGILYLEDPVNHEWYPHYFVLTSSKIYYSEET). The residue at position 506 (Y506) is a Phosphotyrosine. Residues 522 to 544 (ETSSDQGNEDEEEPKEVSSSTEL) form a disordered region. SH2 domains lie at 550–657 (WFHG…SEPV) and 668–756 (WYHA…RYPI). Phosphotyrosine; by SYK is present on Y771. Y775 is subject to Phosphotyrosine. Y783 is modified (phosphotyrosine; by ITK, SYK and TXK). In terms of domain architecture, SH3 spans 791 to 851 (TFKCAVKALF…PSNYVEEMVN (61 aa)). The region spanning 895–931 (FVFSISMASVAHWSLDVAADSQEELQDWVKKIREVAQ) is the PH 2; second part domain. One can recognise a PI-PLC Y-box domain in the interval 953 to 1070 (LSELVVYCRP…GYVLQPSTMR (118 aa)). Phosphotyrosine is present on Y977. Positions 1071-1194 (DEAFDPFDKS…TGYRAVPLKN (124 aa)) constitute a C2 domain. S1221, P1222, S1227, S1233, and S1248 each carry phosphoserine. Y1253 carries the post-translational modification Phosphotyrosine. S1263 is modified (phosphoserine). The segment at 1271 to 1290 (FDSRERRAPRRTRVNGDNRL) is disordered.

Interacts with AGAP2 via its SH3 domain. Interacts (via SH2 domain) with RET. Interacts with FLT1 (tyrosine-phosphorylated). Interacts (via SH2 domain) with FGFR1, FGFR2, FGFR3 and FGFR4 (phosphorylated). Interacts with LAT (phosphorylated) upon TCR activation. Interacts (via SH3 domain) with the Pro-rich domain of TNK1. Associates with BLNK, VAV1, GRB2 and NCK1 in a B-cell antigen receptor-dependent fashion. Interacts with CBLB in activated T-cells; which inhibits phosphorylation. Interacts with SHB. Interacts (via SH3 domain) with the Arg/Gly-rich-flanked Pro-rich domains of KHDRBS1/SAM68. This interaction is selectively regulated by arginine methylation of KHDRBS1/SAM68. Interacts with INPP5D/SHIP1, THEMIS and CLNK. Interacts with AXL, FLT4 and KIT. Interacts with RALGPS1. Interacts (via the SH2 domains) with VIL1 (phosphorylated at C-terminus tyrosine phosphorylation sites). Interacts (via SH2 domain) with PDGFRA and PDGFRB (tyrosine phosphorylated). Interacts with PIP5K1C. Interacts with NTRK1 and NTRK2 (phosphorylated upon ligand-binding). Interacts with SYK; activates PLCG1. Interacts with GRB2, LAT and THEMIS upon TCR activation in thymocytes. Interacts with TESPA1; the association is increased with prolonged stimulation of the TCR and may facilitate the assembly of the LAT signalosome. Interacts (via C-terminal proline-rich domain (PRD)) with PLCG1 (via SH3 domain); this interaction leads to guanine nucleotide exchange from PlCG1 to DNM1 and enhances DNM1-dependent endocytosis. In terms of assembly, (Microbial infection) Interacts (via SH3 domain) with HEV ORF3 protein. It depends on Ca(2+) as a cofactor. Tyrosine phosphorylated in response to signaling via activated FLT3, KIT and PDGFRA. Tyrosine phosphorylated by activated FGFR1, FGFR2, FGFR3 and FGFR4. Tyrosine phosphorylated by activated FLT1 and KDR. Tyrosine phosphorylated by activated PDGFRB. The receptor-mediated activation of PLCG1 involves its phosphorylation by tyrosine kinases, in response to ligation of a variety of growth factor receptors and immune system receptors. For instance, SYK phosphorylates and activates PLCG1 in response to ligation of the B-cell receptor. May be dephosphorylated by PTPRJ. Phosphorylated by ITK and TXK on Tyr-783 upon TCR activation in T-cells. In terms of processing, ubiquitinated by CBLB in activated T-cells.

The protein resides in the cell projection. Its subcellular location is the lamellipodium. It is found in the ruffle. The enzyme catalyses a 1,2-diacyl-sn-glycero-3-phospho-(1D-myo-inositol-4,5-bisphosphate) + H2O = 1D-myo-inositol 1,4,5-trisphosphate + a 1,2-diacyl-sn-glycerol + H(+). The catalysed reaction is a 1,2-diacyl-sn-glycero-3-phospho-(1D-myo-inositol) + H2O = 1D-myo-inositol 1-phosphate + a 1,2-diacyl-sn-glycerol + H(+). With respect to regulation, activated by phosphorylation on tyrosine residues. In terms of biological role, mediates the production of the second messenger molecules diacylglycerol (DAG) and inositol 1,4,5-trisphosphate (IP3). Plays an important role in the regulation of intracellular signaling cascades. Becomes activated in response to ligand-mediated activation of receptor-type tyrosine kinases, such as PDGFRA, PDGFRB, EGFR, FGFR1, FGFR2, FGFR3 and FGFR4. Plays a role in actin reorganization and cell migration. Guanine nucleotide exchange factor that binds the GTPase DNM1 and catalyzes the dissociation of GDP, allowing a GTP molecule to bind in its place, therefore enhancing DNM1-dependent endocytosis. In Homo sapiens (Human), this protein is 1-phosphatidylinositol 4,5-bisphosphate phosphodiesterase gamma-1.